A 57-amino-acid polypeptide reads, in one-letter code: uncharacterized protein (57 aa).

Residues 12–34 (VIAVLSLFVFAVAVFFVGMALLT) traverse the membrane as a helical segment.

It localises to the membrane. This is an uncharacterized protein from Pasteurella multocida (strain Pm70).